A 490-amino-acid chain; its full sequence is MSSPGDTAVLVLAAGPGTRMRSDTPKVLHTLGGRSMLSHLLHAIAKVAPQHLAVVLGHDHERIAPLIADWADDLGRPIDVALQERPRGTGDAVRCGLSALPDDYAGVLVVTSGDTPLLDADTVADLIAGHTATRAAVTVLTTTLSDPSGYGRILRTQDNEVTAIVEHADATESQREIREVNAGVYAFDTAALRSALNRLSADNAQQELYLTDVIAILRGDGLPIRARHVDDSALVAGVNNRVQLAQLGAELNRRIVAAHQLAGVTVVDPATTWIDVDVTIGRDTVIHPGTQLLGRTQIGGHCVVGPDTTLTDVSVGDGASVVRTHGTGSSVGAGATVGPFAYLRPGTVLGDDGKLGAFVETKNATIGTGTKVPHLTYVGDADIGEHSNIGASSVFVNYDGESKRRTTVGSHVRTGSDTMFVAPVTVGDGAYTGAGTVVREDVPPGALAVSAGPQRNIEGWVRRKRPGSAAARAAEAAEKAAGGRPAGEAE.

The tract at residues M1–R241 is pyrophosphorylase. Residues L12–G15, K26, Q83, G88–T89, S112–D114, G151, E166, N181, and N239 each bind UDP-N-acetyl-alpha-D-glucosamine. Position 114 (D114) interacts with Mg(2+). N239 is a binding site for Mg(2+). Positions V242–A262 are linker. The N-acetyltransferase stretch occupies residues G263–E490. UDP-N-acetyl-alpha-D-glucosamine contacts are provided by R344 and K362. Catalysis depends on H374, which acts as the Proton acceptor. UDP-N-acetyl-alpha-D-glucosamine-binding residues include Y377 and N388. Acetyl-CoA-binding positions include A391, N397–Y398, S416, and A434. The segment at R462–E490 is disordered. Low complexity predominate over residues G467–E490.

The protein in the N-terminal section; belongs to the N-acetylglucosamine-1-phosphate uridyltransferase family. It in the C-terminal section; belongs to the transferase hexapeptide repeat family. As to quaternary structure, homotrimer. Mg(2+) is required as a cofactor.

The protein localises to the cytoplasm. It carries out the reaction alpha-D-glucosamine 1-phosphate + acetyl-CoA = N-acetyl-alpha-D-glucosamine 1-phosphate + CoA + H(+). The enzyme catalyses N-acetyl-alpha-D-glucosamine 1-phosphate + UTP + H(+) = UDP-N-acetyl-alpha-D-glucosamine + diphosphate. It functions in the pathway nucleotide-sugar biosynthesis; UDP-N-acetyl-alpha-D-glucosamine biosynthesis; N-acetyl-alpha-D-glucosamine 1-phosphate from alpha-D-glucosamine 6-phosphate (route II): step 2/2. The protein operates within nucleotide-sugar biosynthesis; UDP-N-acetyl-alpha-D-glucosamine biosynthesis; UDP-N-acetyl-alpha-D-glucosamine from N-acetyl-alpha-D-glucosamine 1-phosphate: step 1/1. Its pathway is bacterial outer membrane biogenesis; LPS lipid A biosynthesis. In terms of biological role, catalyzes the last two sequential reactions in the de novo biosynthetic pathway for UDP-N-acetylglucosamine (UDP-GlcNAc). The C-terminal domain catalyzes the transfer of acetyl group from acetyl coenzyme A to glucosamine-1-phosphate (GlcN-1-P) to produce N-acetylglucosamine-1-phosphate (GlcNAc-1-P), which is converted into UDP-GlcNAc by the transfer of uridine 5-monophosphate (from uridine 5-triphosphate), a reaction catalyzed by the N-terminal domain. The sequence is that of Bifunctional protein GlmU from Mycobacterium avium (strain 104).